A 223-amino-acid polypeptide reads, in one-letter code: MPKKFQGENTKSAAARARRAEAKAAADAKKQKELEDAYWRDEDKHVMRKEQRKEEKEKRRLEQLERKKETQRLLEEEDSKLKGGKAPRVAASSKVTRAQIEETLRRDHQHKESPDPAEKAKSHLEVPLEENVNRRVLEEGSVEARTIEDAIAVLSVTEEAVDRHPERRMRAAYTAFEEAQLPRLKQENPNMRLSQLKQMLKKEWLRSPDNPMNQRAVPFNTPK.

Residues 1 to 126 (MPKKFQGENT…AEKAKSHLEV (126 aa)) are disordered. Residues 15 to 82 (ARARRAEAKA…LLEEEDSKLK (68 aa)) are a coiled coil. 2 stretches are compositionally biased toward basic and acidic residues: residues 18–74 (RRAE…QRLL) and 99–126 (QIEE…HLEV). 2 positions are modified to phosphoserine: Ser141 and Ser194.

This sequence belongs to the CCDC124 family. As to quaternary structure, associates with translationally inactive ribosomes in the nonrotated state. Interacts with RASGEF1B.

The protein resides in the cytoplasm. Its subcellular location is the cytoskeleton. It is found in the microtubule organizing center. It localises to the centrosome. The protein localises to the midbody. In terms of biological role, ribosome-binding protein involved in ribosome hibernation: associates with translationally inactive ribosomes and stabilizes the nonrotated conformation of the 80S ribosome, thereby promoting ribosome preservation and storage. Also required for proper progression of late cytokinetic stages. The protein is Coiled-coil domain-containing protein 124 (CCDC124) of Bos taurus (Bovine).